The sequence spans 245 residues: MANQKKKEMVHNFQQKFTDKMKSLGLHFKNIDLYQQAFSHSSFINDFNMNRLEHNERLEFLGDAVLELTVSRYLFDRHPHLPEGNLTKMRATIVCEPSLVIFANKIKLNELILLGKGEEKTGGRTRPSLISDAFEAFVGALYLDQGLDSVWTFAEKVIFPYVEDDELVGVVDFKTQFQEYVHSQNKGDVTYQLIKEEGPAHHRLFTSEVILENKAVAEGKGKTKKESEQKAAEQAYKLMKNKKSL.

The RNase III domain maps to 17-146 (FTDKMKSLGL…FVGALYLDQG (130 aa)). Residue E59 participates in Mg(2+) binding. Residue D63 is part of the active site. 2 residues coordinate Mg(2+): D132 and E135. The active site involves E135. Positions 172 to 241 (DFKTQFQEYV…AEQAYKLMKN (70 aa)) constitute a DRBM domain.

It belongs to the ribonuclease III family. In terms of assembly, homodimer. It depends on Mg(2+) as a cofactor.

It localises to the cytoplasm. It carries out the reaction Endonucleolytic cleavage to 5'-phosphomonoester.. Its function is as follows. Digests double-stranded RNA. Involved in the processing of primary rRNA transcript to yield the immediate precursors to the large and small rRNAs (23S and 16S). Processes some mRNAs, and tRNAs when they are encoded in the rRNA operon. Processes pre-crRNA and tracrRNA of type II CRISPR loci if present in the organism. This is Ribonuclease 3 from Staphylococcus epidermidis (strain ATCC 12228 / FDA PCI 1200).